We begin with the raw amino-acid sequence, 506 residues long: MKMLNSRKIRMERRIVGATNRWRFPQDHFCGDLLALSQMCNVLNVDLDDALKNPDKLCISKFQKLFTESIMDSGTQSGEADVILDCLGFKWELHHPQIFQSETLAKLYLTALIQNTKSSQRDLEKILKVHSTERMKKRSPVKKIIISLRINDPAVTRVAFALALKNLYMNEVEMTVDNVLGVLASAHILQFNRLFRKCVSTMLNRLTPCTIKNFYLAGCKYKEEQLTNACEKWLAMNLVPLVGTQIHLRHIPEPLLYKVLKSPRLFTFSEFHLLKTLLMWVYLQMNGKVQTLPIHETMLAFFSSFPKKSCFLEQDPGHSWMPLFLCLRLHGITSGKDLEEIKHINFFPESWLVRVTANHYHALESGGNMVHLKDLSTQAMRFGLLFRQEYTTYSETISIYGYFFEIKGIKHDTTSYSFSMQRIRHTDLECPSSVCEHSTISLRSERLVKYEIRAQTLVDGRWQEFGTNQIMQKFGFIKPGCKSHALKIQTVGIPIYASFAFIFPAS.

The region spanning 150 to 206 (INDPAVTRVAFALALKNLYMNEVEMTVDNVLGVLASAHILQFNRLFRKCVSTMLNRL) is the BTB domain.

The polypeptide is BTB/POZ domain-containing protein 16 (Btbd16) (Rattus norvegicus (Rat)).